The chain runs to 656 residues: tRNA 5-methylaminomethyl-2-thiouridine biosynthesis bifunctional protein MnmC (656 aa).

The tRNA (mnm(5)s(2)U34)-methyltransferase stretch occupies residues 1 to 236; sequence MTDPLIPAVL…KRAMLVGRFA (236 aa). The interval 260–656 is FAD-dependent cmnm(5)s(2)U34 oxidoreductase; sequence IGTGLAGCAV…LRALRQGTVS (397 aa).

This sequence in the N-terminal section; belongs to the methyltransferase superfamily. tRNA (mnm(5)s(2)U34)-methyltransferase family. The protein in the C-terminal section; belongs to the DAO family. The cofactor is FAD.

It is found in the cytoplasm. The catalysed reaction is 5-aminomethyl-2-thiouridine(34) in tRNA + S-adenosyl-L-methionine = 5-methylaminomethyl-2-thiouridine(34) in tRNA + S-adenosyl-L-homocysteine + H(+). Catalyzes the last two steps in the biosynthesis of 5-methylaminomethyl-2-thiouridine (mnm(5)s(2)U) at the wobble position (U34) in tRNA. Catalyzes the FAD-dependent demodification of cmnm(5)s(2)U34 to nm(5)s(2)U34, followed by the transfer of a methyl group from S-adenosyl-L-methionine to nm(5)s(2)U34, to form mnm(5)s(2)U34. This Paraburkholderia xenovorans (strain LB400) protein is tRNA 5-methylaminomethyl-2-thiouridine biosynthesis bifunctional protein MnmC.